Consider the following 305-residue polypeptide: Tyrosine recombinase XerC (305 aa).

Residues 4 to 95 form the Core-binding (CB) domain; the sequence is TSIQALINKW…AVKNFYRFLE (92 aa). The 183-residue stretch at 116-298 folds into the Tyr recombinase domain; sequence LLPKALSEDD…SIKHLEAVYT (183 aa). Active-site residues include arginine 159, lysine 182, histidine 250, arginine 253, and histidine 276. Residue tyrosine 285 is the O-(3'-phospho-DNA)-tyrosine intermediate of the active site.

It belongs to the 'phage' integrase family. XerC subfamily. In terms of assembly, forms a cyclic heterotetrameric complex composed of two molecules of XerC and two molecules of XerD.

It localises to the cytoplasm. Site-specific tyrosine recombinase, which acts by catalyzing the cutting and rejoining of the recombining DNA molecules. The XerC-XerD complex is essential to convert dimers of the bacterial chromosome into monomers to permit their segregation at cell division. It also contributes to the segregational stability of plasmids. The chain is Tyrosine recombinase XerC from Rickettsia massiliae (strain Mtu5).